The sequence spans 652 residues: Acetyl-coenzyme A synthetase (652 aa).

CoA-binding positions include 189–192 (RGGK) and Ser-311. ATP-binding positions include 387-389 (GEP), 411-416 (DTWWQT), Asp-500, and Arg-515. Ser-523 is a binding site for CoA. Arg-526 contributes to the ATP binding site. The Mg(2+) site is built by Val-537, His-539, and Ile-542. CoA is bound at residue Lys-584. Position 609 is an N6-acetyllysine (Lys-609).

The protein belongs to the ATP-dependent AMP-binding enzyme family. Mg(2+) is required as a cofactor. Acetylated. Deacetylation by the SIR2-homolog deacetylase activates the enzyme.

It carries out the reaction acetate + ATP + CoA = acetyl-CoA + AMP + diphosphate. Its function is as follows. Catalyzes the conversion of acetate into acetyl-CoA (AcCoA), an essential intermediate at the junction of anabolic and catabolic pathways. AcsA undergoes a two-step reaction. In the first half reaction, AcsA combines acetate with ATP to form acetyl-adenylate (AcAMP) intermediate. In the second half reaction, it can then transfer the acetyl group from AcAMP to the sulfhydryl group of CoA, forming the product AcCoA. The protein is Acetyl-coenzyme A synthetase of Bartonella quintana (strain Toulouse) (Rochalimaea quintana).